The primary structure comprises 307 residues: Acyl transferase (307 aa).

Catalysis depends on charge relay system residues Ser-116, Asp-213, and His-243.

The protein belongs to the LuxD family.

The protein operates within lipid metabolism; fatty acid reduction for biolumincescence. Acyl transferase is part of the fatty acid reductase system required for aldehyde biosynthesis; it produces fatty acids for the luminescent reaction. In Aliivibrio fischeri (strain ATCC 700601 / ES114) (Vibrio fischeri), this protein is Acyl transferase.